Here is a 300-residue protein sequence, read N- to C-terminus: GTP-binding protein At2g22870 (300 aa).

The EngB-type G domain maps to 119 to 297; that stretch reads DRPEIAILGR…LLHMSQLRNY (179 aa). Residues 127–134, 154–158, 172–175, 239–242, and 276–278 contribute to the GTP site; these read GRSNVGKS, GKTQL, DLPG, TKCD, and TSS. Positions 134 and 156 each coordinate Mg(2+).

Belongs to the TRAFAC class TrmE-Era-EngA-EngB-Septin-like GTPase superfamily. EngB GTPase family. Requires Mg(2+) as cofactor.

The protein is GTP-binding protein At2g22870 (EMB2001) of Arabidopsis thaliana (Mouse-ear cress).